Reading from the N-terminus, the 467-residue chain is Serine decarboxylase 2 (467 aa).

H178 is a binding site for substrate. At K290 the chain carries N6-(pyridoxal phosphate)lysine.

It belongs to the group II decarboxylase family. Requires pyridoxal 5'-phosphate as cofactor.

The enzyme catalyses L-serine + H(+) = ethanolamine + CO2. In terms of biological role, catalyzes the biosynthesis of ethanolamine from serine. Decarboxylation of free serine is the major source of ethanolamine production in plants and ethanolamine metabolism is crucial for the synthesis of choline, phosphatidylethanolamine (PE) and phosphatidylcholine (PC), and thus for plant growth. This is Serine decarboxylase 2 from Oryza sativa subsp. japonica (Rice).